A 229-amino-acid polypeptide reads, in one-letter code: MTVRRRGFMAWTWFITWRFLLVVVLLLLVLLLVLRFVPPPTTSFMLQSAYPVSQHWVSIDELPSHLPLAVVASEDQLFPKHFGIDFTSITKALNQYDDGQGLRGASTITQQTAKNLLLWPGRNLVRKGLEAMLAVSLEAVWGKKRILEVYLNVAEFGKGIYGVEAASRHYFNKSARYLSINEAARLAVLLPSPRSRSPHHLTPYLHQRVAWGEKQMRQLGSGYLKTILN.

Residues 14 to 34 (FITWRFLLVVVLLLLVLLLVL) traverse the membrane as a helical segment.

This sequence belongs to the glycosyltransferase 51 family.

It is found in the cell inner membrane. It catalyses the reaction [GlcNAc-(1-&gt;4)-Mur2Ac(oyl-L-Ala-gamma-D-Glu-L-Lys-D-Ala-D-Ala)](n)-di-trans,octa-cis-undecaprenyl diphosphate + beta-D-GlcNAc-(1-&gt;4)-Mur2Ac(oyl-L-Ala-gamma-D-Glu-L-Lys-D-Ala-D-Ala)-di-trans,octa-cis-undecaprenyl diphosphate = [GlcNAc-(1-&gt;4)-Mur2Ac(oyl-L-Ala-gamma-D-Glu-L-Lys-D-Ala-D-Ala)](n+1)-di-trans,octa-cis-undecaprenyl diphosphate + di-trans,octa-cis-undecaprenyl diphosphate + H(+). It participates in cell wall biogenesis; peptidoglycan biosynthesis. Its function is as follows. Peptidoglycan polymerase that catalyzes glycan chain elongation from lipid-linked precursors. In Shewanella denitrificans (strain OS217 / ATCC BAA-1090 / DSM 15013), this protein is Biosynthetic peptidoglycan transglycosylase.